A 59-amino-acid polypeptide reads, in one-letter code: Large ribosomal subunit protein bL32B (59 aa).

This sequence belongs to the bacterial ribosomal protein bL32 family.

This Enterococcus faecalis (strain ATCC 700802 / V583) protein is Large ribosomal subunit protein bL32B (rpmF2).